Reading from the N-terminus, the 646-residue chain is EF-hand calcium-binding domain-containing protein 6 (646 aa).

EF-hand domains lie at 1 to 27 (FLET…FDIP), 28 to 63 (LTPR…NYSP), 109 to 144 (DCYQ…CGCS), 214 to 249 (SSQL…FCHK), 321 to 356 (SHYH…NVQI), and 357 to 392 (LTDE…ERAA). The residue at position 29 (threonine 29) is a Phosphothreonine. Residues 390-452 (RAATPTATGD…TTAIPGTPPL (63 aa)) form a disordered region. Over residues 432–446 (KPQSHPCTAASTTAI) the composition is skewed to polar residues. Position 435 is a phosphoserine (serine 435). Phosphothreonine is present on residues threonine 439 and threonine 449. An interaction with PARK7 region spans residues 448–646 (GTPPLQNCDP…YNDFLRAFLQ (199 aa)). 4 EF-hand domains span residues 468–503 (GCWR…FNLD), 504–539 (ISKE…LLKA), 579–614 (HCWR…YSIN), and 615–646 (LSEE…AFLQ). Positions 552–646 (NAHKMKDSGA…YNDFLRAFLQ (95 aa)) are interaction with AR.

In terms of assembly, microtubule inner protein component of sperm flagellar doublet microtubules. Binds PARK7. Part of a ternary complex containing PARK7, EFCAB6/DJBP and AR.

It is found in the nucleus. The protein resides in the cytoplasm. Its subcellular location is the cytoskeleton. It localises to the flagellum axoneme. Functionally, negatively regulates the androgen receptor by recruiting histone deacetylase complex, and protein DJ-1 antagonizes this inhibition by abrogation of this complex. Microtubule inner protein (MIP) part of the dynein-decorated doublet microtubules (DMTs) in cilia axoneme, which is required for motile cilia beating. This chain is EF-hand calcium-binding domain-containing protein 6 (EFCAB6), found in Macaca fascicularis (Crab-eating macaque).